We begin with the raw amino-acid sequence, 477 residues long: Bifunctional protein HldE (477 aa).

Positions 1-318 are ribokinase; that stretch reads MKVNLPAFER…ENAVRGRAAT (318 aa). 195 to 198 is an ATP binding site; the sequence is NLSE. Residue aspartate 264 is part of the active site. Residues 344–477 are cytidylyltransferase; sequence MTNGVFDILH…IKKIQTESEK (134 aa).

In the N-terminal section; belongs to the carbohydrate kinase PfkB family. This sequence in the C-terminal section; belongs to the cytidylyltransferase family. As to quaternary structure, homodimer.

The catalysed reaction is D-glycero-beta-D-manno-heptose 7-phosphate + ATP = D-glycero-beta-D-manno-heptose 1,7-bisphosphate + ADP + H(+). It carries out the reaction D-glycero-beta-D-manno-heptose 1-phosphate + ATP + H(+) = ADP-D-glycero-beta-D-manno-heptose + diphosphate. The protein operates within nucleotide-sugar biosynthesis; ADP-L-glycero-beta-D-manno-heptose biosynthesis; ADP-L-glycero-beta-D-manno-heptose from D-glycero-beta-D-manno-heptose 7-phosphate: step 1/4. It functions in the pathway nucleotide-sugar biosynthesis; ADP-L-glycero-beta-D-manno-heptose biosynthesis; ADP-L-glycero-beta-D-manno-heptose from D-glycero-beta-D-manno-heptose 7-phosphate: step 3/4. Functionally, catalyzes the phosphorylation of D-glycero-D-manno-heptose 7-phosphate at the C-1 position to selectively form D-glycero-beta-D-manno-heptose-1,7-bisphosphate. In terms of biological role, catalyzes the ADP transfer from ATP to D-glycero-beta-D-manno-heptose 1-phosphate, yielding ADP-D-glycero-beta-D-manno-heptose. This is Bifunctional protein HldE from Salmonella arizonae (strain ATCC BAA-731 / CDC346-86 / RSK2980).